A 678-amino-acid chain; its full sequence is Inositol-trisphosphate 3-kinase C (678 aa).

Disordered stretches follow at residues Leu-26–Ser-128 and Asp-151–Ser-300. Residues Pro-44–Pro-58 show a composition bias toward gly residues. Composition is skewed to basic and acidic residues over residues Trp-61–Leu-76 and Glu-107–Asp-116. Residue Ser-160 is modified to Phosphoserine. 2 stretches are compositionally biased toward basic and acidic residues: residues Glu-173 to Arg-196 and Ser-220 to Asp-236. The short motif at Leu-318 to Ile-326 is the Nuclear export signal element. The disordered stretch occupies residues Pro-328–Ser-380. Thr-330 carries the phosphothreonine modification. Position 398 is a phosphoserine (Ser-398). ATP contacts are provided by residues Lys-426, Glu-466 to Leu-468, and Asp-479. Substrate is bound by residues Lys-481, Arg-502–Lys-508, and Lys-529–Arg-536. A calmodulin-binding region spans residues Asp-504–Val-512. The ATP site is built by Lys-553 and Asp-633. Lys-636 is a binding site for substrate.

It belongs to the inositol phosphokinase (IPK) family.

The protein localises to the nucleus. It is found in the cytoplasm. It carries out the reaction 1D-myo-inositol 1,4,5-trisphosphate + ATP = 1D-myo-inositol 1,3,4,5-tetrakisphosphate + ADP + H(+). Its activity is regulated as follows. Activated by calcium/calmodulin. Inhibited by high concentrations of the substrate Ins(1,2,4)P3, and allosterically activated by the product Ins(1,3,4,5)P4. In terms of biological role, catalyzes the phosphorylation of 1D-myo-inositol 1,4,5-trisphosphate (InsP3) into 1D-myo-inositol 1,3,4,5-tetrakisphosphate and participates to the regulation of calcium homeostasis. Can phosphorylate inositol 2,4,5-triphosphate to inositol 2,4,5,6-tetraphosphate. This Mus musculus (Mouse) protein is Inositol-trisphosphate 3-kinase C (Itpkc).